A 396-amino-acid polypeptide reads, in one-letter code: Cytochrome b (396 aa).

The next 4 membrane-spanning stretches (helical) occupy residues 32–52 (FGSL…TLAM), 76–98 (WLLR…LHIG), 113–133 (LWSI…IGYV), and 179–199 (FFSL…MHLL). Heme b contacts are provided by histidine 82 and histidine 96. Residues histidine 183 and histidine 197 each coordinate heme b. Histidine 202 provides a ligand contact to a ubiquinone. 4 helical membrane passes run 225–245 (FTSK…IFVF), 289–309 (LGGV…ALIH), 321–341 (LLNL…WVGA), and 348–368 (YILI…ILMI).

This sequence belongs to the cytochrome b family. As to quaternary structure, fungal cytochrome b-c1 complex contains 10 subunits; 3 respiratory subunits, 2 core proteins and 5 low-molecular weight proteins. Cytochrome b-c1 complex is a homodimer. Heme b serves as cofactor.

The protein resides in the mitochondrion inner membrane. In terms of biological role, component of the ubiquinol-cytochrome c reductase complex (complex III or cytochrome b-c1 complex) that is part of the mitochondrial respiratory chain. The b-c1 complex mediates electron transfer from ubiquinol to cytochrome c. Contributes to the generation of a proton gradient across the mitochondrial membrane that is then used for ATP synthesis. The polypeptide is Cytochrome b (cob) (Spizellomyces punctatus).